The sequence spans 429 residues: 3-phosphoshikimate 1-carboxyvinyltransferase (429 aa).

The 3-phosphoshikimate site is built by Lys11, Ser12, and Arg16. Position 11 (Lys11) interacts with phosphoenolpyruvate. Gly82 and Arg110 together coordinate phosphoenolpyruvate. Residues Ser155, Gln157, Asp302, and Lys329 each contribute to the 3-phosphoshikimate site. Gln157 provides a ligand contact to phosphoenolpyruvate. The Proton acceptor role is filled by Asp302. Phosphoenolpyruvate contacts are provided by Arg333 and Arg385.

It belongs to the EPSP synthase family. As to quaternary structure, monomer.

The protein localises to the cytoplasm. The enzyme catalyses 3-phosphoshikimate + phosphoenolpyruvate = 5-O-(1-carboxyvinyl)-3-phosphoshikimate + phosphate. It functions in the pathway metabolic intermediate biosynthesis; chorismate biosynthesis; chorismate from D-erythrose 4-phosphate and phosphoenolpyruvate: step 6/7. Catalyzes the transfer of the enolpyruvyl moiety of phosphoenolpyruvate (PEP) to the 5-hydroxyl of shikimate-3-phosphate (S3P) to produce enolpyruvyl shikimate-3-phosphate and inorganic phosphate. This chain is 3-phosphoshikimate 1-carboxyvinyltransferase, found in Helicobacter acinonychis (strain Sheeba).